The sequence spans 493 residues: Neuronal acetylcholine receptor subunit alpha-6 (493 aa).

Positions 1 to 30 (MLNGWGRGDLRSGLCLWICGFLAFFKGSRG) are cleaved as a signal peptide. At 31–240 (CVSEEQLFHT…TYSFYIRRLP (210 aa)) the chain is on the extracellular side. N-linked (GlcNAc...) asparagine glycosylation is found at N54 and N171. Disulfide bonds link C158-C172 and C222-C223. A run of 3 helical transmembrane segments spans residues 241–265 (MFYT…FYLP), 272–290 (VTLC…LVIT), and 306–327 (YLLF…VLNI). Topologically, residues 328–464 (HYRTPATHTM…WKYMAMVVDR (137 aa)) are cytoplasmic. S401 is modified (phosphoserine). Residues 465–484 (VFLWVFIIVCVFGTVGLFLQ) traverse the membrane as a helical segment.

This sequence belongs to the ligand-gated ion channel (TC 1.A.9) family. Acetylcholine receptor (TC 1.A.9.1) subfamily. Alpha-6/CHRNA6 sub-subfamily. In terms of assembly, neuronal AChR is composed of two different types of subunits: alpha and non-alpha (beta). CHRNA6/alpha-6 subunit can be combined to CHRNB2/beta-2 and CHRNA4/alpha-4 to give rise to functional receptors. Interacts with LYPD6. As to expression, predominantly expressed in only a few brain areas, including dopaminergic neurons, norepirephrine neurons and cells of the visual system.

The protein resides in the synaptic cell membrane. It carries out the reaction Ca(2+)(in) = Ca(2+)(out). The enzyme catalyses K(+)(in) = K(+)(out). The catalysed reaction is Na(+)(in) = Na(+)(out). Its activity is regulated as follows. Activated by a myriad of ligands such as acetylcholine, cytisine and nicotine. CHRNA6 nAChR activity is inhibited by the antagonists alpha-conotoxin MII and PIA, a small disulfide-constrained peptides from cone snails. Component of neuronal acetylcholine receptors (nAChRs) that function as pentameric, ligand-gated cation channels with high calcium permeability among other activities. nAChRs are excitatory neurotrasnmitter receptors formed by a collection of nAChR subunits known to mediate synaptic transmission in the nervous system and the neuromuscular junction. Each nAchR subunit confers differential attributes to channel properties, including activation, deactivation and desensitization kinetics, pH sensitivity, cation permeability, and binding to allosteric modulators. CHRNA6 forms pentameric channels with CHRNB2 and CHRNA4 that exhibit high sensitivity to ACh and nicotine and are predominantly expressed in only a few brain areas, including dopaminergic neurons, norepirephrine neurons and cells of the visual system. nAChrs containing CHRNA6 subunits mediate endogenous cholinergic modulation of dopamine and gamma-aminobutyric acid (GABA) release in response to nicotine at nerve terminals. The protein is Neuronal acetylcholine receptor subunit alpha-6 (Chrna6) of Rattus norvegicus (Rat).